Reading from the N-terminus, the 401-residue chain is DNA damage checkpoint control protein RAD17 (401 aa).

The tract at residues 367 to 393 is disordered; it reads KKIKLPSEEENNKNRESEDEENHCKYP. Residues 371–393 are compositionally biased toward basic and acidic residues; the sequence is LPSEEENNKNRESEDEENHCKYP. A Phosphoserine modification is found at Ser-383.

This sequence belongs to the rad1 family. As to quaternary structure, component of the checkpoint clamp complex composed of DDC1, MEC3 and RAD17. The interaction with MEC3 is performed in a RAD17-dependent manner. The checkpoint clamp complex loads onto DNA. Interacts with the DNA polymerase zeta subunit REV7. 2 RAD17 subunits also form a heterotrimer with one MEC3 subunit.

The protein localises to the nucleus. Functionally, component of the checkpoint clamp complex involved in the surveillance mechanism that allows the DNA repair pathways to act to restore the integrity of the DNA prior to DNA synthesis or separation of the replicated chromosomes. Associates with sites of DNA damage and modulates the MEC1 signaling pathway and the activation of RAD53 in response to DNA damage at phase G1. The complex also physically regulates DNA polymerase zeta-dependent mutagenesis by controlling the access of polymerase zeta to damaged DNA. Contrary to its human counterpart, the 9-1-1 complex, the checkpoint clamp complex shows no detectable exonuclease activity. This Saccharomyces cerevisiae (strain ATCC 204508 / S288c) (Baker's yeast) protein is DNA damage checkpoint control protein RAD17 (RAD17).